A 904-amino-acid chain; its full sequence is Protein translocase subunit SecA (904 aa).

Residues glutamine 89, 107-111 (GEGKT), and aspartate 502 each bind ATP. Zn(2+) contacts are provided by cysteine 886, cysteine 888, cysteine 897, and histidine 898.

This sequence belongs to the SecA family. As to quaternary structure, monomer and homodimer. Part of the essential Sec protein translocation apparatus which comprises SecA, SecYEG and auxiliary proteins SecDF-YajC and YidC. The cofactor is Zn(2+).

Its subcellular location is the cell inner membrane. The protein localises to the cytoplasm. It catalyses the reaction ATP + H2O + cellular proteinSide 1 = ADP + phosphate + cellular proteinSide 2.. In terms of biological role, part of the Sec protein translocase complex. Interacts with the SecYEG preprotein conducting channel. Has a central role in coupling the hydrolysis of ATP to the transfer of proteins into and across the cell membrane, serving both as a receptor for the preprotein-SecB complex and as an ATP-driven molecular motor driving the stepwise translocation of polypeptide chains across the membrane. In Rhizobium etli (strain CIAT 652), this protein is Protein translocase subunit SecA.